A 314-amino-acid chain; its full sequence is Putative S-adenosyl-L-methionine-dependent methyltransferase MRA_3805 (314 aa).

Residues aspartate 132 and aspartate 161–leucine 162 contribute to the S-adenosyl-L-methionine site.

It belongs to the UPF0677 family.

Functionally, exhibits S-adenosyl-L-methionine-dependent methyltransferase activity. The sequence is that of Putative S-adenosyl-L-methionine-dependent methyltransferase MRA_3805 from Mycobacterium tuberculosis (strain ATCC 25177 / H37Ra).